The primary structure comprises 350 residues: GTPase Obg (350 aa).

One can recognise an Obg domain in the interval 1–159 (MKFIDEAKIT…WELALELKVL (159 aa)). The tract at residues 17–43 (GDGSASFRREKYIPKGGPDGGDGGRGG) is disordered. Over residues 33–43 (GPDGGDGGRGG) the composition is skewed to gly residues. The OBG-type G domain maps to 160–334 (ADVGLLGMPN…LTYAVMDYLG (175 aa)). Residues 166-173 (GMPNAGKS), 191-195 (FTTLA), 213-216 (DIPG), 284-287 (NKLD), and 315-317 (SAL) each bind GTP. Positions 173 and 193 each coordinate Mg(2+).

Belongs to the TRAFAC class OBG-HflX-like GTPase superfamily. OBG GTPase family. As to quaternary structure, monomer. Mg(2+) is required as a cofactor.

Its subcellular location is the cytoplasm. Functionally, an essential GTPase which binds GTP, GDP and possibly (p)ppGpp with moderate affinity, with high nucleotide exchange rates and a fairly low GTP hydrolysis rate. Plays a role in control of the cell cycle, stress response, ribosome biogenesis and in those bacteria that undergo differentiation, in morphogenesis control. In Thiobacillus denitrificans (strain ATCC 25259 / T1), this protein is GTPase Obg.